We begin with the raw amino-acid sequence, 284 residues long: MDAIKKKMQAMKLEKDNAMDCALLCEQQARDANLRAEKAEEEARSLQKKIQQIENDLDQTMEQLMQVNAKLDEKDKALQNAESEVAALNRRIQLLEEDLERSEERLATATAKLAEASQAVDESERARKILESKGLADEERMDALENQLKEARFMAEEADKKYDEVARKLAMVEADLERAEERAESGESKIVELEEELRVVGNNLKSLEVSEEKANLREEEYKQQIKTLTTRLKEAEARAEFAERSVQKLQKEVDRLEDELVHEKEKYKFICDDLDMTFTELAGY.

The stretch at 22–266 (ALLCEQQARD…EDELVHEKEK (245 aa)) forms a coiled coil.

It belongs to the tropomyosin family. In terms of assembly, homodimer.

Functionally, tropomyosin, in association with the troponin complex, plays a central role in the calcium dependent regulation of muscle contraction. The chain is Tropomyosin Per a 7.0101 from Periplaneta americana (American cockroach).